Reading from the N-terminus, the 283-residue chain is Pantothenate synthetase (283 aa).

Residue 30–37 (MGNLHAGH) coordinates ATP. The Proton donor role is filled by His37. Gln61 provides a ligand contact to (R)-pantoate. Position 61 (Gln61) interacts with beta-alanine. Residue 149 to 152 (GEKD) participates in ATP binding. Position 155 (Gln155) interacts with (R)-pantoate. ATP contacts are provided by residues Val178 and 186–189 (LSSR).

Belongs to the pantothenate synthetase family. In terms of assembly, homodimer.

The protein resides in the cytoplasm. The enzyme catalyses (R)-pantoate + beta-alanine + ATP = (R)-pantothenate + AMP + diphosphate + H(+). The protein operates within cofactor biosynthesis; (R)-pantothenate biosynthesis; (R)-pantothenate from (R)-pantoate and beta-alanine: step 1/1. Functionally, catalyzes the condensation of pantoate with beta-alanine in an ATP-dependent reaction via a pantoyl-adenylate intermediate. This Pseudomonas aeruginosa (strain UCBPP-PA14) protein is Pantothenate synthetase.